Consider the following 460-residue polypeptide: Citrate synthase, peroxisomal (460 aa).

S21 is modified (phosphoserine). Residues K218 and K239 each participate in a glycyl lysine isopeptide (Lys-Gly) (interchain with G-Cter in ubiquitin) cross-link. Residues H293 and H339 contribute to the active site. Residues K354 and K385 each participate in a glycyl lysine isopeptide (Lys-Gly) (interchain with G-Cter in ubiquitin) cross-link. D394 is an active-site residue. The C-terminal peroxisome targeting signal (PTS1) motif lies at 458–460; that stretch reads SKL.

It belongs to the citrate synthase family. As to quaternary structure, interacts with F-box protein UCC1. In terms of processing, ubiquitinated by the E3 ubiquitin-protein ligase complex SCF(UCC1), which leads to its degradation by the proteasome. Ubiquitination is prevented by oxaloacetate, suggesting the existence of an oxaloacetate-dependent positive feedback loop that stabilizes CIT2.

It is found in the cytoplasm. It localises to the peroxisome. It catalyses the reaction oxaloacetate + acetyl-CoA + H2O = citrate + CoA + H(+). It participates in carbohydrate metabolism; tricarboxylic acid cycle; isocitrate from oxaloacetate: step 1/2. Peroxisomal citrate synthase involved in the citrate homeostasis. Catalyzes the condensation of acetyl coenzyme A and oxaloacetate to form citrate. Citrate synthase is the rate-limiting enzyme of the tricarboxylic acid (TCA) cycle. The sequence is that of Citrate synthase, peroxisomal from Saccharomyces cerevisiae (strain ATCC 204508 / S288c) (Baker's yeast).